Consider the following 350-residue polypeptide: Zona pellucida-binding protein 1 (350 aa).

The N-terminal stretch at 1-38 is a signal peptide; sequence MEASAPDRARRGWRRARAAASPLSRAAVVLLLSALVLR. Residues Asn113, Asn186, and Asn339 are each glycosylated (N-linked (GlcNAc...) asparagine).

It belongs to the zona pellucida-binding protein Sp38 family. N-glycosylated. Expressed in testis. Detected in sperm cells.

It localises to the cytoplasmic vesicle. The protein localises to the secretory vesicle. It is found in the acrosome. The protein resides in the secreted. Its subcellular location is the acrosome membrane. In terms of biological role, plays a role in acrosome compaction and sperm morphogenesis. Is implicated in sperm-oocyte interaction during fertilization. This chain is Zona pellucida-binding protein 1 (ZPBP), found in Sus scrofa (Pig).